The sequence spans 61 residues: Beta-insect depressant toxin BotIT5 (61 aa).

Residues 1–61 (DGYIRKRDGC…TWKSETNTCG (61 aa)) enclose the LCN-type CS-alpha/beta domain. Cystine bridges form between C10/C60, C14/C35, C21/C42, and C25/C44. The residue at position 61 (G61) is a Glycine amide.

It belongs to the long (4 C-C) scorpion toxin superfamily. Sodium channel inhibitor family. Beta subfamily. As to expression, expressed by the venom gland.

The protein localises to the secreted. Depressant insect beta-toxins cause a transient contraction paralysis followed by a slow flaccid paralysis. They bind voltage-independently at site-4 of sodium channels (Nav) and shift the voltage of activation toward more negative potentials thereby affecting sodium channel activation and promoting spontaneous and repetitive firing. This toxin is active only on insects. This Buthus occitanus tunetanus (Common European scorpion) protein is Beta-insect depressant toxin BotIT5.